The sequence spans 356 residues: Golgi-resident adenosine 3',5'-bisphosphate 3'-phosphatase (356 aa).

Residue methionine 1 is modified to N-acetylmethionine. Over 1 to 12 the chain is Cytoplasmic; sequence MAPMGIRLSPLG. Residues 13–33 traverse the membrane as a helical segment; that stretch reads VAVFFLLGLGVLYHLYSGFLA. The Lumenal portion of the chain corresponds to 34 to 356; sequence GRFSLFGLGS…KLPDLEKSGH (323 aa). Residues 84–104 form a disordered region; it reads ESNVLHEKSKGKTREGADDKM. The Proton acceptor role is filled by aspartate 108. 4 residues coordinate Mg(2+): glutamate 131, aspartate 172, leucine 174, and aspartate 175. Threonine 177 serves as the catalytic Proton acceptor. AMP-binding residues include serine 240 and histidine 243. Residue asparagine 257 is glycosylated (N-linked (GlcNAc...) asparagine). AMP is bound by residues glycine 266 and lysine 270. Aspartate 298 is a Mg(2+) binding site.

It belongs to the inositol monophosphatase superfamily. Requires Mg(2+) as cofactor. Post-translationally, N-glycosylated. Contains N-linked glycan resistant to endoglycosydase H.

The protein localises to the golgi apparatus. The protein resides in the trans-Golgi network membrane. The catalysed reaction is adenosine 3',5'-bisphosphate + H2O = AMP + phosphate. Its pathway is sulfur metabolism. Strongly inhibited by lithium. Functionally, exhibits 3'-nucleotidase activity toward adenosine 3',5'-bisphosphate (PAP), namely hydrolyzes adenosine 3',5'-bisphosphate into adenosine 5'-monophosphate (AMP) and a phosphate. May play a role in the formation of skeletal elements derived through endochondral ossification, possibly by clearing adenosine 3',5'-bisphosphate produced by Golgi sulfotransferases during glycosaminoglycan sulfation. Has no activity toward 3'-phosphoadenosine 5'-phosphosulfate (PAPS) or inositol phosphate (IP) substrates including I(1)P, I(1,4)P2, I(1,3,4)P3, I(1,4,5)P3 and I(1,3,4,5)P4. In Mus musculus (Mouse), this protein is Golgi-resident adenosine 3',5'-bisphosphate 3'-phosphatase.